A 142-amino-acid polypeptide reads, in one-letter code: Pro-vaccinia growth factor (142 aa).

The N-terminal stretch at 1–18 (MSMKYLMLLFAAMIIRSF) is a signal peptide. Topologically, residues 19–100 (ADSGNAIETT…SENPNTTTSY (82 aa)) are extracellular. Asparagine 34 is a glycosylation site (N-linked (GlcNAc...) asparagine; by host). Residues 41–81 (AIRLCGPEGDGYCLHGDCIHARDIDGMYCRCSHGYTGIRCQ) enclose the EGF-like domain. Intrachain disulfides connect cysteine 45-cysteine 58, cysteine 53-cysteine 69, and cysteine 71-cysteine 80. Residue asparagine 95 is glycosylated (N-linked (GlcNAc...) asparagine; by host). The helical transmembrane segment at 101–121 (IPSPGIMLVLVGIIIIITCCL) threads the bilayer. Topologically, residues 122-142 (LSVYRFTRRTNKLPLQDMVVP) are cytoplasmic.

This sequence belongs to the orthopoxvirus OPG019 family. In terms of assembly, vaccinia growth factor interacts with host EGFR and promotes EGFR dimerization.

Its subcellular location is the host membrane. It localises to the secreted. In terms of biological role, stimulates cellular proliferation (hyperplasia)and mobility around infected cells to promote rapid and efficient spread of infection. This effect is beneficial for virus replication in vivo, because poxviruses replicate possibly better in proliferating cells than in quiescent cells. Acts by binding host EGFR, inducing its dimerization, autophosphorylation and leading to activation of several cellular pathways regulating cell proliferation or cell survival. The activation by host EGFR of mitogen activated protein kinases (MAPK) and extracellular-signal regulated kinases (ERK) are essential for the positive effect of vaccinia growth factor on poxvirus virulence in vivo. The sequence is that of Pro-vaccinia growth factor (OPG019) from Vaccinia virus (strain Copenhagen) (VACV).